We begin with the raw amino-acid sequence, 163 residues long: NADH-quinone oxidoreductase subunit I (163 aa).

2 4Fe-4S ferredoxin-type domains span residues 53–83 (LRRY…IEAG) and 94–123 (VRYD…EGPN). Positions 63, 66, 69, 73, 103, 106, 109, and 113 each coordinate [4Fe-4S] cluster.

This sequence belongs to the complex I 23 kDa subunit family. NDH-1 is composed of 14 different subunits. Subunits NuoA, H, J, K, L, M, N constitute the membrane sector of the complex. The cofactor is [4Fe-4S] cluster.

It is found in the cell inner membrane. The catalysed reaction is a quinone + NADH + 5 H(+)(in) = a quinol + NAD(+) + 4 H(+)(out). In terms of biological role, NDH-1 shuttles electrons from NADH, via FMN and iron-sulfur (Fe-S) centers, to quinones in the respiratory chain. The immediate electron acceptor for the enzyme in this species is believed to be ubiquinone. Couples the redox reaction to proton translocation (for every two electrons transferred, four hydrogen ions are translocated across the cytoplasmic membrane), and thus conserves the redox energy in a proton gradient. This chain is NADH-quinone oxidoreductase subunit I, found in Agrobacterium fabrum (strain C58 / ATCC 33970) (Agrobacterium tumefaciens (strain C58)).